The chain runs to 156 residues: Snaclec A12 (156 aa).

An N-terminal signal peptide occupies residues Met-1–Ala-23. 3 disulfide bridges follow: Cys-27–Cys-38, Cys-55–Cys-148, and Cys-123–Cys-140. Positions Tyr-34–Met-149 constitute a C-type lectin domain.

It belongs to the snaclec family. In terms of assembly, heterodimer; disulfide-linked. Expressed by the venom gland.

The protein localises to the secreted. Functionally, interferes with one step of hemostasis (modulation of platelet aggregation, or coagulation cascade, for example). The protein is Snaclec A12 of Macrovipera lebetinus (Levantine viper).